A 1892-amino-acid polypeptide reads, in one-letter code: Protein TIC 214 (1892 aa).

Helical transmembrane passes span 18-38 (IINSVVVVGLYYGFLTTFSIG), 64-84 (FITGQLMMFISIYYAPLHLAL), 87-107 (PHTITVLALPYLLFHFFWNNH), 124-144 (LSIQCVFLNNLIFQLFNHFIL), 172-192 (VGWLIGHIFFMKWLGLVLVWI), and 221-241 (IFSILLFITCVYYLGRIPSPI). Disordered stretches follow at residues 250 to 300 (SKTE…EGWD), 794 to 814 (REEQTKREEKKEKDKKGENKR), and 1581 to 1609 (RIQEEKEPASQGEKERGSDIENKGNLGPV). Residues 256–268 (VESEEEKDVEIET) show a composition bias toward acidic residues. The segment covering 1581-1602 (RIQEEKEPASQGEKERGSDIEN) has biased composition (basic and acidic residues).

It belongs to the TIC214 family. Part of the Tic complex.

It localises to the plastid. The protein localises to the chloroplast inner membrane. Its function is as follows. Involved in protein precursor import into chloroplasts. May be part of an intermediate translocation complex acting as a protein-conducting channel at the inner envelope. The polypeptide is Protein TIC 214 (Nicotiana tomentosiformis (Tobacco)).